A 194-amino-acid chain; its full sequence is Cytochrome c biogenesis ATP-binding export protein CcmA (194 aa).

Residues 5-194 enclose the ABC transporter domain; the sequence is LALDGVACIR…LDELVMGVLA (190 aa). 37 to 44 is a binding site for ATP; sequence GPNGAGKS.

The protein belongs to the ABC transporter superfamily. CcmA exporter (TC 3.A.1.107) family. The complex is composed of two ATP-binding proteins (CcmA) and two transmembrane proteins (CcmB).

Its subcellular location is the cell inner membrane. The catalysed reaction is heme b(in) + ATP + H2O = heme b(out) + ADP + phosphate + H(+). In terms of biological role, part of the ABC transporter complex CcmAB involved in the biogenesis of c-type cytochromes; once thought to export heme, this seems not to be the case, but its exact role is uncertain. Responsible for energy coupling to the transport system. The chain is Cytochrome c biogenesis ATP-binding export protein CcmA from Sphingopyxis alaskensis (strain DSM 13593 / LMG 18877 / RB2256) (Sphingomonas alaskensis).